We begin with the raw amino-acid sequence, 123 residues long: Large ribosomal subunit protein bL12 (123 aa).

The residue at position 84 (lysine 84) is an N6-methyllysine. The tract at residues 94 to 123 is disordered; the sequence is PATLKEGMSKEDGDEAKTKLEEAGASVELK. The span at 100 to 115 shows a compositional bias: basic and acidic residues; that stretch reads GMSKEDGDEAKTKLEE.

It belongs to the bacterial ribosomal protein bL12 family. In terms of assembly, homodimer. Part of the ribosomal stalk of the 50S ribosomal subunit. Forms a multimeric L10(L12)X complex, where L10 forms an elongated spine to which 2 to 4 L12 dimers bind in a sequential fashion. Binds GTP-bound translation factors.

Functionally, seems to be the binding site for several of the factors involved in protein synthesis and appears to be essential for accurate translation. Its function is as follows. Forms part of the ribosomal stalk which helps the ribosome interact with GTP-bound translation factors. Is thus essential for accurate translation. The chain is Large ribosomal subunit protein bL12 from Halophilic eubacterium NRCC 41227.